The sequence spans 25 residues: Alanine racemase (25 aa).

Belongs to the alanine racemase family. In terms of assembly, homodimer. Requires pyridoxal 5'-phosphate as cofactor.

It carries out the reaction L-alanine = D-alanine. It functions in the pathway amino-acid biosynthesis; D-alanine biosynthesis; D-alanine from L-alanine: step 1/1. Catalyzes the interconversion of L-alanine and D-alanine. This is Alanine racemase from Pseudomonas fluorescens.